The sequence spans 510 residues: Ribonuclease Y (510 aa).

A helical transmembrane segment spans residues 2–22 (IYIIFSSIFAGFILGFLVRVF). The 61-residue stretch at 198–258 (TVASVELPND…IRKELAKRTL (61 aa)) folds into the KH domain. An HD domain is found at 324 to 419 (VLSHSKETAI…VQIADAISAS (96 aa)).

It belongs to the RNase Y family.

It is found in the cell membrane. Functionally, endoribonuclease that initiates mRNA decay. This Borreliella burgdorferi (strain ATCC 35210 / DSM 4680 / CIP 102532 / B31) (Borrelia burgdorferi) protein is Ribonuclease Y.